Here is a 229-residue protein sequence, read N- to C-terminus: ATP-dependent Clp protease proteolytic subunit 1 (229 aa).

S129 acts as the Nucleophile in catalysis. H154 is a catalytic residue.

This sequence belongs to the peptidase S14 family. In terms of assembly, fourteen ClpP subunits assemble into 2 heptameric rings which stack back to back to give a disk-like structure with a central cavity, resembling the structure of eukaryotic proteasomes.

The protein localises to the cytoplasm. The enzyme catalyses Hydrolysis of proteins to small peptides in the presence of ATP and magnesium. alpha-casein is the usual test substrate. In the absence of ATP, only oligopeptides shorter than five residues are hydrolyzed (such as succinyl-Leu-Tyr-|-NHMec, and Leu-Tyr-Leu-|-Tyr-Trp, in which cleavage of the -Tyr-|-Leu- and -Tyr-|-Trp bonds also occurs).. In terms of biological role, cleaves peptides in various proteins in a process that requires ATP hydrolysis. Has a chymotrypsin-like activity. Plays a major role in the degradation of misfolded proteins. The sequence is that of ATP-dependent Clp protease proteolytic subunit 1 from Thermosynechococcus vestitus (strain NIES-2133 / IAM M-273 / BP-1).